The chain runs to 335 residues: DNA polymerase beta (335 aa).

Lys-41 is covalently cross-linked (Glycyl lysine isopeptide (Lys-Gly) (interchain with G-Cter in ubiquitin)). K(+) is bound at residue Lys-60. Residue Lys-60 participates in Na(+) binding. Lys-61 is covalently cross-linked (Glycyl lysine isopeptide (Lys-Gly) (interchain with G-Cter in ubiquitin)). The K(+) site is built by Leu-62 and Val-65. Na(+)-binding residues include Leu-62 and Val-65. Catalysis depends on Lys-72, which acts as the Nucleophile; Schiff-base intermediate with DNA; for 5'-dRP lyase activity. The residue at position 72 (Lys-72) is an N6-acetyllysine. A Glycyl lysine isopeptide (Lys-Gly) (interchain with G-Cter in ubiquitin) cross-link involves residue Lys-81. Arg-83 bears the Omega-N-methylarginine; by PRMT6 mark. Thr-101, Val-103, and Ile-106 together coordinate K(+). Residues Thr-101, Val-103, and Ile-106 each coordinate Na(+). Residue Arg-149 coordinates a 2'-deoxyribonucleoside 5'-triphosphate. At Arg-152 the chain carries Omega-N-methylarginine; by PRMT6. A 2'-deoxyribonucleoside 5'-triphosphate is bound by residues Ser-180, Arg-183, Gly-189, and Asp-190. A DNA-binding region spans residues 183-192 (RGAESSGDMD). Mg(2+) is bound by residues Asp-190, Asp-192, and Asp-256.

The protein belongs to the DNA polymerase type-X family. In terms of assembly, monomer. Binds single-stranded DNA (ssDNA). Interacts with APEX1, LIG1, LIG3, FEN1, PCNA and XRCC1. Interacts with HUWE1/ARF-BP1, STUB1/CHIP and USP47. Interacts with FAM168A. Mg(2+) is required as a cofactor. In terms of processing, methylation by PRMT6 stimulates the polymerase activity by enhancing DNA binding and processivity. Ubiquitinated at Lys-41, Lys-61 and Lys-81: monoubiquitinated by HUWE1/ARF-BP1. Monoubiquitinated protein is then the target of STUB1/CHIP, which catalyzes polyubiquitination from monoubiquitin, leading to degradation by the proteasome. USP47 mediates the deubiquitination of monoubiquitinated protein, preventing polyubiquitination by STUB1/CHIP and its subsequent degradation.

The protein localises to the nucleus. Its subcellular location is the cytoplasm. The enzyme catalyses DNA(n) + a 2'-deoxyribonucleoside 5'-triphosphate = DNA(n+1) + diphosphate. It carries out the reaction a 5'-end 2'-deoxyribose-2'-deoxyribonucleotide-DNA = (2E,4S)-4-hydroxypenten-2-al-5-phosphate + a 5'-end 5'-phospho-2'-deoxyribonucleoside-DNA + H(+). The catalysed reaction is 2'-deoxyribonucleotide-(2'-deoxyribose 5'-phosphate)-2'-deoxyribonucleotide-DNA = a 3'-end 2'-deoxyribonucleotide-(2,3-dehydro-2,3-deoxyribose 5'-phosphate)-DNA + a 5'-end 5'-phospho-2'-deoxyribonucleoside-DNA + H(+). In terms of biological role, repair polymerase that plays a key role in base-excision repair. During this process, the damaged base is excised by specific DNA glycosylases, the DNA backbone is nicked at the abasic site by an apurinic/apyrimidic (AP) endonuclease, and POLB removes 5'-deoxyribose-phosphate from the preincised AP site acting as a 5'-deoxyribose-phosphate lyase (5'-dRP lyase); through its DNA polymerase activity, it adds one nucleotide to the 3' end of the arising single-nucleotide gap. Conducts 'gap-filling' DNA synthesis in a stepwise distributive fashion rather than in a processive fashion as for other DNA polymerases. It is also able to cleave sugar-phosphate bonds 3' to an intact AP site, acting as an AP lyase. This Mus musculus (Mouse) protein is DNA polymerase beta (Polb).